The primary structure comprises 219 residues: Phosphoribosylformylglycinamidine synthase subunit PurQ (219 aa).

The Glutamine amidotransferase type-1 domain maps to 2–219; sequence KIAVITFPGS…KVVLDLILGS (218 aa). The Nucleophile role is filled by cysteine 86. Active-site residues include histidine 195 and glutamate 197.

As to quaternary structure, part of the FGAM synthase complex composed of 1 PurL, 1 PurQ and 2 PurS subunits.

It is found in the cytoplasm. It carries out the reaction N(2)-formyl-N(1)-(5-phospho-beta-D-ribosyl)glycinamide + L-glutamine + ATP + H2O = 2-formamido-N(1)-(5-O-phospho-beta-D-ribosyl)acetamidine + L-glutamate + ADP + phosphate + H(+). The enzyme catalyses L-glutamine + H2O = L-glutamate + NH4(+). Its pathway is purine metabolism; IMP biosynthesis via de novo pathway; 5-amino-1-(5-phospho-D-ribosyl)imidazole from N(2)-formyl-N(1)-(5-phospho-D-ribosyl)glycinamide: step 1/2. Functionally, part of the phosphoribosylformylglycinamidine synthase complex involved in the purines biosynthetic pathway. Catalyzes the ATP-dependent conversion of formylglycinamide ribonucleotide (FGAR) and glutamine to yield formylglycinamidine ribonucleotide (FGAM) and glutamate. The FGAM synthase complex is composed of three subunits. PurQ produces an ammonia molecule by converting glutamine to glutamate. PurL transfers the ammonia molecule to FGAR to form FGAM in an ATP-dependent manner. PurS interacts with PurQ and PurL and is thought to assist in the transfer of the ammonia molecule from PurQ to PurL. This chain is Phosphoribosylformylglycinamidine synthase subunit PurQ, found in Leptospira interrogans serogroup Icterohaemorrhagiae serovar copenhageni (strain Fiocruz L1-130).